Reading from the N-terminus, the 354-residue chain is Opsin-5 (354 aa).

The Extracellular segment spans residues 1–33 (MALNHTALPQDERLPHYLRDGDPFASKLSWEAD). An N-linked (GlcNAc...) asparagine glycan is attached at Asn-4. A helical membrane pass occupies residues 34-54 (LVAGFYLTIIGILSTFGNGYV). The Cytoplasmic segment spans residues 55 to 74 (LYMSSRRKKKLRPAEIMTIN). Residues 75–95 (LAVCDLGISVVGKPFTIISCF) traverse the membrane as a helical segment. Residues 96–108 (CHRWVFGWIGCRW) are Extracellular-facing. Cys-106 and Cys-183 are joined by a disulfide. A helical membrane pass occupies residues 109–129 (YGWAGFFFGCGSLITMTAVSL). Over 130–150 (DRYLKICYLSYGVWLKRKHAY) the chain is Cytoplasmic. A helical transmembrane segment spans residues 151 to 171 (ICLAAIWAYASFWTTMPLVGL). Topologically, residues 172 to 197 (GDYVPEPFGTSCTLDWWLAQASVGGQ) are extracellular. A helical transmembrane segment spans residues 198 to 218 (VFILNILFFCLLLPTAVIVFS). Residues 219-252 (YVKIIAKVKSSSKEVAHFDSRIHSSHVLEMKLTK) are Cytoplasmic-facing. A helical membrane pass occupies residues 253–273 (VAMLICAGFLIAWIPYAVVSV). Residues 274–288 (WSAFGRPDSIPIQLS) are Extracellular-facing. A helical transmembrane segment spans residues 289-309 (VVPTLLAKSAAMYNPIIYQVI). Position 296 is an N6-(retinylidene)lysine (Lys-296). Residues 310–353 (DYKFACCQTGGLKATKKKSLEGFRLHTVTTVRKSSAVLEIHEEW) are Cytoplasmic-facing. 2 S-palmitoyl cysteine lipidation sites follow: Cys-315 and Cys-316.

It belongs to the G-protein coupled receptor 1 family. Opsin subfamily. In terms of processing, it is uncertain whether Cys-315 or Cys-316 is palmitoylated. As to expression, detected in brain and retina and cell lines derived from neural retina.

It localises to the cell membrane. In terms of biological role, G-protein coupled receptor which selectively activates G(i) type G proteins via ultraviolet A (UVA) light-mediated activation in the retina. Preferentially binds the chromophore 11-cis retinal and is a bistable protein that displays emission peaks at 380 nm (UVA light) and 470 nm (blue light). Required for the light-response in the inner plexiform layer, and contributes to the regulation of the light-response in the nerve fiber layer, via phosphorylated DAT/SLC6A3 dopamine uptake. Involved in local corneal and retinal circadian rhythm photoentrainment via modulation of the UVA light-induced phase-shift of the retina clock. Acts as a circadian photoreceptor in the outer ear, via modulation of circadian clock-gene expression in response to violet light during the light-to-dark transition phase and night phase of the circadian cycle. Required in the retina to negatively regulate hyaloid vessel regression during postnatal development via light-dependent OPN5-SLC32A1-DRD2-VEGFR2 signaling. Involved in the light-dependent regulation of retina and vitreous compartment dopamine levels. The sequence is that of Opsin-5 (OPN5) from Homo sapiens (Human).